A 496-amino-acid chain; its full sequence is Alanine aminotransferase 1 (496 aa).

Ala-2 is modified (N-acetylalanine). Thr-22 is subject to Phosphothreonine. N6-(pyridoxal phosphate)lysine is present on Lys-314.

It belongs to the class-I pyridoxal-phosphate-dependent aminotransferase family. Alanine aminotransferase subfamily. In terms of assembly, homodimer. It depends on pyridoxal 5'-phosphate as a cofactor. As to expression, mainly expressed in liver, intestine, colon and white adipose tissue.

The protein localises to the cytoplasm. The catalysed reaction is L-alanine + 2-oxoglutarate = pyruvate + L-glutamate. It participates in amino-acid degradation; L-alanine degradation via transaminase pathway; pyruvate from L-alanine: step 1/1. Catalyzes the reversible transamination between alanine and 2-oxoglutarate to form pyruvate and glutamate. Participates in cellular nitrogen metabolism and also in liver gluconeogenesis starting with precursors transported from skeletal muscles. This Mus musculus (Mouse) protein is Alanine aminotransferase 1 (Gpt).